Here is a 286-residue protein sequence, read N- to C-terminus: Glycine--tRNA ligase alpha subunit (286 aa).

It belongs to the class-II aminoacyl-tRNA synthetase family. As to quaternary structure, tetramer of two alpha and two beta subunits.

Its subcellular location is the cytoplasm. It carries out the reaction tRNA(Gly) + glycine + ATP = glycyl-tRNA(Gly) + AMP + diphosphate. The protein is Glycine--tRNA ligase alpha subunit of Thermotoga petrophila (strain ATCC BAA-488 / DSM 13995 / JCM 10881 / RKU-1).